The primary structure comprises 277 residues: Bifunctional protein FolD (277 aa).

Residues 156–158 (GRS), serine 183, and isoleucine 224 contribute to the NADP(+) site.

Belongs to the tetrahydrofolate dehydrogenase/cyclohydrolase family. As to quaternary structure, homodimer.

It catalyses the reaction (6R)-5,10-methylene-5,6,7,8-tetrahydrofolate + NADP(+) = (6R)-5,10-methenyltetrahydrofolate + NADPH. It carries out the reaction (6R)-5,10-methenyltetrahydrofolate + H2O = (6R)-10-formyltetrahydrofolate + H(+). It functions in the pathway one-carbon metabolism; tetrahydrofolate interconversion. Its function is as follows. Catalyzes the oxidation of 5,10-methylenetetrahydrofolate to 5,10-methenyltetrahydrofolate and then the hydrolysis of 5,10-methenyltetrahydrofolate to 10-formyltetrahydrofolate. The polypeptide is Bifunctional protein FolD (Kosmotoga olearia (strain ATCC BAA-1733 / DSM 21960 / TBF 19.5.1)).